The following is a 129-amino-acid chain: Small ribosomal subunit protein uS11 (129 aa).

This sequence belongs to the universal ribosomal protein uS11 family. Part of the 30S ribosomal subunit. Interacts with proteins S7 and S18. Binds to IF-3.

Located on the platform of the 30S subunit, it bridges several disparate RNA helices of the 16S rRNA. Forms part of the Shine-Dalgarno cleft in the 70S ribosome. The protein is Small ribosomal subunit protein uS11 of Methylocella silvestris (strain DSM 15510 / CIP 108128 / LMG 27833 / NCIMB 13906 / BL2).